Here is a 333-residue protein sequence, read N- to C-terminus: Protein FanF (333 aa).

The N-terminal stretch at 1 to 22 is a signal peptide; sequence MKNKYNLLFFLFLLCYGDVALA.

In terms of processing, three disulfide bonds are present.

The protein localises to the fimbrium. Minor component of K99 fimbriae. Is not required for binding of K99 fimbriae to the ganglioside receptor. May play a role in initiation, elongation and flexibility of the fimbriae. This is Protein FanF (fanF) from Escherichia coli.